Consider the following 100-residue polypeptide: Urease subunit gamma (100 aa).

Belongs to the urease gamma subunit family. Heterotrimer of UreA (gamma), UreB (beta) and UreC (alpha) subunits. Three heterotrimers associate to form the active enzyme.

The protein localises to the cytoplasm. It catalyses the reaction urea + 2 H2O + H(+) = hydrogencarbonate + 2 NH4(+). It functions in the pathway nitrogen metabolism; urea degradation; CO(2) and NH(3) from urea (urease route): step 1/1. The sequence is that of Urease subunit gamma from Dinoroseobacter shibae (strain DSM 16493 / NCIMB 14021 / DFL 12).